The primary structure comprises 208 residues: Holliday junction branch migration complex subunit RuvA (208 aa).

Residues 1-64 are domain I; the sequence is MIGKLKGIVD…EDMIRLYGFR (64 aa). Positions 65-143 are domain II; sequence VDAEREWFRL…AFAPIDPALI (79 aa). Residues 144–152 are flexible linker; it reads ALTGAVEDR. The tract at residues 153 to 208 is domain III; it reads TAPQPVADAISALVNLGYAQIQASAAIAAALKGLGEEAGTVEAKTLIRLGLRELAR.

The protein belongs to the RuvA family. In terms of assembly, homotetramer. Forms an RuvA(8)-RuvB(12)-Holliday junction (HJ) complex. HJ DNA is sandwiched between 2 RuvA tetramers; dsDNA enters through RuvA and exits via RuvB. An RuvB hexamer assembles on each DNA strand where it exits the tetramer. Each RuvB hexamer is contacted by two RuvA subunits (via domain III) on 2 adjacent RuvB subunits; this complex drives branch migration. In the full resolvosome a probable DNA-RuvA(4)-RuvB(12)-RuvC(2) complex forms which resolves the HJ.

The protein localises to the cytoplasm. Functionally, the RuvA-RuvB-RuvC complex processes Holliday junction (HJ) DNA during genetic recombination and DNA repair, while the RuvA-RuvB complex plays an important role in the rescue of blocked DNA replication forks via replication fork reversal (RFR). RuvA specifically binds to HJ cruciform DNA, conferring on it an open structure. The RuvB hexamer acts as an ATP-dependent pump, pulling dsDNA into and through the RuvAB complex. HJ branch migration allows RuvC to scan DNA until it finds its consensus sequence, where it cleaves and resolves the cruciform DNA. The chain is Holliday junction branch migration complex subunit RuvA from Methylorubrum extorquens (strain CM4 / NCIMB 13688) (Methylobacterium extorquens).